Consider the following 236-residue polypeptide: Uridylate kinase (236 aa).

11–14 serves as a coordination point for ATP; it reads KFSG. Residue G53 coordinates UMP. Positions 54 and 58 each coordinate ATP. Residues D73 and 134–141 each bind UMP; that span reads TGSPFFTT. Residues T161, Y167, and D170 each contribute to the ATP site.

This sequence belongs to the UMP kinase family. In terms of assembly, homohexamer.

The protein resides in the cytoplasm. The catalysed reaction is UMP + ATP = UDP + ADP. The protein operates within pyrimidine metabolism; CTP biosynthesis via de novo pathway; UDP from UMP (UMPK route): step 1/1. Its activity is regulated as follows. Inhibited by UTP. Its function is as follows. Catalyzes the reversible phosphorylation of UMP to UDP. This chain is Uridylate kinase, found in Hydrogenovibrio crunogenus (strain DSM 25203 / XCL-2) (Thiomicrospira crunogena).